The following is a 216-amino-acid chain: Phosphatidylserine decarboxylase proenzyme (216 aa).

The active-site Schiff-base intermediate with substrate; via pyruvic acid is serine 182. Serine 182 is subject to Pyruvic acid (Ser); by autocatalysis.

Belongs to the phosphatidylserine decarboxylase family. PSD-A subfamily. Heterodimer of a large membrane-associated beta subunit and a small pyruvoyl-containing alpha subunit. It depends on pyruvate as a cofactor. Is synthesized initially as an inactive proenzyme. Formation of the active enzyme involves a self-maturation process in which the active site pyruvoyl group is generated from an internal serine residue via an autocatalytic post-translational modification. Two non-identical subunits are generated from the proenzyme in this reaction, and the pyruvate is formed at the N-terminus of the alpha chain, which is derived from the carboxyl end of the proenzyme. The post-translation cleavage follows an unusual pathway, termed non-hydrolytic serinolysis, in which the side chain hydroxyl group of the serine supplies its oxygen atom to form the C-terminus of the beta chain, while the remainder of the serine residue undergoes an oxidative deamination to produce ammonia and the pyruvoyl prosthetic group on the alpha chain.

The protein localises to the cell membrane. The catalysed reaction is a 1,2-diacyl-sn-glycero-3-phospho-L-serine + H(+) = a 1,2-diacyl-sn-glycero-3-phosphoethanolamine + CO2. The protein operates within phospholipid metabolism; phosphatidylethanolamine biosynthesis; phosphatidylethanolamine from CDP-diacylglycerol: step 2/2. Functionally, catalyzes the formation of phosphatidylethanolamine (PtdEtn) from phosphatidylserine (PtdSer). The sequence is that of Phosphatidylserine decarboxylase proenzyme from Burkholderia pseudomallei (strain 1106a).